A 279-amino-acid chain; its full sequence is S-methyl-5'-thioadenosine phosphorylase (279 aa).

Phosphate is bound by residues serine 28, 70-71 (RH), and 103-104 (SA). Methionine 202 provides a ligand contact to substrate. Threonine 203 serves as a coordination point for phosphate. A substrate-binding site is contributed by 226–228 (DYD).

This sequence belongs to the PNP/MTAP phosphorylase family. MTAP subfamily. In terms of assembly, homohexamer. Dimer of a homotrimer.

It catalyses the reaction S-methyl-5'-thioadenosine + phosphate = 5-(methylsulfanyl)-alpha-D-ribose 1-phosphate + adenine. Its pathway is amino-acid biosynthesis; L-methionine biosynthesis via salvage pathway; S-methyl-5-thio-alpha-D-ribose 1-phosphate from S-methyl-5'-thioadenosine (phosphorylase route): step 1/1. In terms of biological role, catalyzes the reversible phosphorylation of S-methyl-5'-thioadenosine (MTA) to adenine and 5-methylthioribose-1-phosphate. Involved in the breakdown of MTA, a major by-product of polyamine biosynthesis. Responsible for the first step in the methionine salvage pathway after MTA has been generated from S-adenosylmethionine. Has broad substrate specificity with 6-aminopurine nucleosides as preferred substrates. The polypeptide is S-methyl-5'-thioadenosine phosphorylase (Pyrobaculum aerophilum (strain ATCC 51768 / DSM 7523 / JCM 9630 / CIP 104966 / NBRC 100827 / IM2)).